A 762-amino-acid polypeptide reads, in one-letter code: MAIQTSNLGYPRIGLQREWKKTLEAFWSNKIDEEQFLTTMKEIRLQHVKAQQEKGIELIPIGDFTYYDHVLDTAYMLGFIPSRFSEFTSYLDVYFAMARGSKDHVASEMTKWFNTNYHYIVPEYEEGLQISLKDNRPLRLYEEAKQELGIDGKPVILGPYTFLKLAKGYTQEQFATILKQLVAPYVQLLSELHAAGAQIIQVDEPIFASLTKEEVQQAKEIYEAIRKEVPNANLLLQTYFDSVEENYEEIITFPVSSIGLDFVHGKEGNLHAISKYGFPADKTLAVGCIDGRNIWRADLDEVLTLFTTLQKQVQTKDFIVQPSCSLLHTPIDKTEETHLSTELFDALAFANQKLEELVLIHSALTQGTESIHNELETYRNVHHTIRSSAARNREDVKAARTALKEEDFSRPLPFEKRYELQQVALKLPLLPTTTIGSFPQTTEVRQTRKEWRNGVISNEQYEQFIEKETEKWIRYQEEIGLDVLVHGEFERTDMVEYFGERLAGFSFTKNGWVQSYGSRCVKPPVIYGDVAFINGMTIKETVYAQSLTEKVVKGMLTGPVTILNWSFVRNDIPRKEVSYQIALALRHEIELLESSGIRVIQVDEPALREGMPLKEKDWDAYITWAVQSFLLATSSVANETQIHTHMCYSNFEDIVDAIRALDADVISIETSRSHGEFIDTLKHTTYEKGIGLGVYDIHSPRVPSKDEMYKIVEQSLKVCDPKYFWINPDCGLKTRRTEEVIPALEHMVQAAKDARSLLKTNA.

Residues 17–20 (REWK) and lysine 111 contribute to the 5-methyltetrahydropteroyltri-L-glutamate site. Residues 435-437 (IGS) and glutamate 488 contribute to the L-homocysteine site. L-methionine is bound by residues 435–437 (IGS) and glutamate 488. Residues 519–520 (RC) and tryptophan 565 each bind 5-methyltetrahydropteroyltri-L-glutamate. Aspartate 603 contacts L-homocysteine. Aspartate 603 is an L-methionine binding site. Glutamate 609 contributes to the 5-methyltetrahydropteroyltri-L-glutamate binding site. 3 residues coordinate Zn(2+): histidine 645, cysteine 647, and glutamate 669. The active-site Proton donor is the histidine 698. Cysteine 730 contacts Zn(2+).

Belongs to the vitamin-B12 independent methionine synthase family. Requires Zn(2+) as cofactor.

It carries out the reaction 5-methyltetrahydropteroyltri-L-glutamate + L-homocysteine = tetrahydropteroyltri-L-glutamate + L-methionine. The protein operates within amino-acid biosynthesis; L-methionine biosynthesis via de novo pathway; L-methionine from L-homocysteine (MetE route): step 1/1. In terms of biological role, catalyzes the transfer of a methyl group from 5-methyltetrahydrofolate to homocysteine resulting in methionine formation. The chain is 5-methyltetrahydropteroyltriglutamate--homocysteine methyltransferase from Bacillus cereus (strain ATCC 10987 / NRS 248).